A 422-amino-acid polypeptide reads, in one-letter code: Gamma-glutamyl phosphate reductase (422 aa).

Belongs to the gamma-glutamyl phosphate reductase family.

It is found in the cytoplasm. It carries out the reaction L-glutamate 5-semialdehyde + phosphate + NADP(+) = L-glutamyl 5-phosphate + NADPH + H(+). The protein operates within amino-acid biosynthesis; L-proline biosynthesis; L-glutamate 5-semialdehyde from L-glutamate: step 2/2. Functionally, catalyzes the NADPH-dependent reduction of L-glutamate 5-phosphate into L-glutamate 5-semialdehyde and phosphate. The product spontaneously undergoes cyclization to form 1-pyrroline-5-carboxylate. This is Gamma-glutamyl phosphate reductase from Chlorobium phaeovibrioides (strain DSM 265 / 1930) (Prosthecochloris vibrioformis (strain DSM 265)).